A 535-amino-acid chain; its full sequence is T-complex protein 1 subunit epsilon (535 aa).

Belongs to the TCP-1 chaperonin family. Heterooligomeric complex of about 850 to 900 kDa that forms two stacked rings, 12 to 16 nm in diameter.

The protein resides in the cytoplasm. Functionally, molecular chaperone; assists the folding of proteins upon ATP hydrolysis. Known to play a role, in vitro, in the folding of actin and tubulin. The polypeptide is T-complex protein 1 subunit epsilon (Arabidopsis thaliana (Mouse-ear cress)).